Reading from the N-terminus, the 232-residue chain is Lipoprotein-releasing system ATP-binding protein LolD (232 aa).

The 221-residue stretch at Val11–Leu231 folds into the ABC transporter domain. Ala47–Ser54 is a binding site for ATP.

It belongs to the ABC transporter superfamily. Lipoprotein translocase (TC 3.A.1.125) family. The complex is composed of two ATP-binding proteins (LolD) and two transmembrane proteins (LolC and LolE).

The protein localises to the cell inner membrane. Its function is as follows. Part of the ABC transporter complex LolCDE involved in the translocation of mature outer membrane-directed lipoproteins, from the inner membrane to the periplasmic chaperone, LolA. Responsible for the formation of the LolA-lipoprotein complex in an ATP-dependent manner. The chain is Lipoprotein-releasing system ATP-binding protein LolD from Nitrobacter hamburgensis (strain DSM 10229 / NCIMB 13809 / X14).